The sequence spans 130 residues: L-ectoine synthase (130 aa).

It belongs to the ectoine synthase family.

It catalyses the reaction (2S)-4-acetamido-2-aminobutanoate = L-ectoine + H2O. It participates in amine and polyamine biosynthesis; ectoine biosynthesis; L-ectoine from L-aspartate 4-semialdehyde: step 3/3. Catalyzes the circularization of gamma-N-acetyl-alpha,gamma-diaminobutyric acid (ADABA) to ectoine (1,4,5,6-tetrahydro-2-methyl-4-pyrimidine carboxylic acid), which is an excellent osmoprotectant. The polypeptide is L-ectoine synthase (Mycolicibacterium vanbaalenii (strain DSM 7251 / JCM 13017 / BCRC 16820 / KCTC 9966 / NRRL B-24157 / PYR-1) (Mycobacterium vanbaalenii)).